Here is a 244-residue protein sequence, read N- to C-terminus: uncharacterized protein (244 aa).

Composition is skewed to basic and acidic residues over residues 1–10 (MNDPFARMET) and 100–127 (GTRGDPAREEVAGAEDLPHAGGEDHGEE). Disordered regions lie at residues 1-79 (MNDP…GEEL), 100-130 (GTRGDPAREEVAGAEDLPHAGGEDHGEEPNY), and 219-244 (TGASRVHAAGRRVSPSPGTWLEEIKL).

This is an uncharacterized protein from Homo sapiens (Human).